The following is a 287-amino-acid chain: Elongation factor Ts (287 aa).

Residues 80–83 (TDFL) form an involved in Mg(2+) ion dislocation from EF-Tu region.

This sequence belongs to the EF-Ts family.

It localises to the cytoplasm. Associates with the EF-Tu.GDP complex and induces the exchange of GDP to GTP. It remains bound to the aminoacyl-tRNA.EF-Tu.GTP complex up to the GTP hydrolysis stage on the ribosome. The polypeptide is Elongation factor Ts (Ectopseudomonas mendocina (strain ymp) (Pseudomonas mendocina)).